The primary structure comprises 379 residues: Lipid-A-disaccharide synthase (379 aa).

This sequence belongs to the LpxB family.

The catalysed reaction is a lipid X + a UDP-2-N,3-O-bis[(3R)-3-hydroxyacyl]-alpha-D-glucosamine = a lipid A disaccharide + UDP + H(+). Its pathway is bacterial outer membrane biogenesis; LPS lipid A biosynthesis. In terms of biological role, condensation of UDP-2,3-diacylglucosamine and 2,3-diacylglucosamine-1-phosphate to form lipid A disaccharide, a precursor of lipid A, a phosphorylated glycolipid that anchors the lipopolysaccharide to the outer membrane of the cell. This is Lipid-A-disaccharide synthase from Vibrio campbellii (strain ATCC BAA-1116).